The primary structure comprises 385 residues: Probable protein phosphatase 2C 79 (385 aa).

The signal sequence occupies residues 1 to 18 (MLSLFFNFLTSCLWPSSS). The PPM-type phosphatase domain maps to 47-356 (DFSMAVVQAN…DDITVVVLFL (310 aa)). The residue at position 76 (Ser-76) is a Phosphoserine. Mn(2+)-binding residues include Asp-87, Gly-88, Asp-288, and Asp-347.

The protein belongs to the PP2C family. Requires Mg(2+) as cofactor. Mn(2+) is required as a cofactor.

The enzyme catalyses O-phospho-L-seryl-[protein] + H2O = L-seryl-[protein] + phosphate. It catalyses the reaction O-phospho-L-threonyl-[protein] + H2O = L-threonyl-[protein] + phosphate. Functionally, may dephosphorylate and repress plasma membrane H(+)-ATPases (PM H(+)-ATPases, e.g. AHA1 and AHA2), thus influencing negatively plant growth and fitness. The protein is Probable protein phosphatase 2C 79 of Arabidopsis thaliana (Mouse-ear cress).